The following is a 455-amino-acid chain: Glutamyl-tRNA reductase (455 aa).

Residues 49 to 52 (TCNR), Ser-109, 114 to 116 (ETQ), and Gln-120 each bind substrate. Cys-50 functions as the Nucleophile in the catalytic mechanism. An NADP(+)-binding site is contributed by 189 to 194 (GAGKMG).

The protein belongs to the glutamyl-tRNA reductase family. As to quaternary structure, homodimer.

It catalyses the reaction (S)-4-amino-5-oxopentanoate + tRNA(Glu) + NADP(+) = L-glutamyl-tRNA(Glu) + NADPH + H(+). It participates in porphyrin-containing compound metabolism; protoporphyrin-IX biosynthesis; 5-aminolevulinate from L-glutamyl-tRNA(Glu): step 1/2. In terms of biological role, catalyzes the NADPH-dependent reduction of glutamyl-tRNA(Glu) to glutamate 1-semialdehyde (GSA). The chain is Glutamyl-tRNA reductase from Bacillus velezensis (strain DSM 23117 / BGSC 10A6 / LMG 26770 / FZB42) (Bacillus amyloliquefaciens subsp. plantarum).